A 212-amino-acid chain; its full sequence is Large ribosomal subunit protein uL3 (212 aa).

This sequence belongs to the universal ribosomal protein uL3 family. Part of the 50S ribosomal subunit. Forms a cluster with proteins L14 and L19.

In terms of biological role, one of the primary rRNA binding proteins, it binds directly near the 3'-end of the 23S rRNA, where it nucleates assembly of the 50S subunit. In Ruminiclostridium cellulolyticum (strain ATCC 35319 / DSM 5812 / JCM 6584 / H10) (Clostridium cellulolyticum), this protein is Large ribosomal subunit protein uL3.